A 360-amino-acid polypeptide reads, in one-letter code: Glutamate 5-kinase (360 aa).

K11 is a binding site for ATP. Substrate contacts are provided by S51, D138, and N150. In terms of domain architecture, PUA spans 278–356; sequence KGEIHINECA…GKKPVVHYDY (79 aa).

The protein belongs to the glutamate 5-kinase family.

It localises to the cytoplasm. It catalyses the reaction L-glutamate + ATP = L-glutamyl 5-phosphate + ADP. It participates in amino-acid biosynthesis; L-proline biosynthesis; L-glutamate 5-semialdehyde from L-glutamate: step 1/2. Functionally, catalyzes the transfer of a phosphate group to glutamate to form L-glutamate 5-phosphate. This is Glutamate 5-kinase from Bacteroides thetaiotaomicron (strain ATCC 29148 / DSM 2079 / JCM 5827 / CCUG 10774 / NCTC 10582 / VPI-5482 / E50).